The sequence spans 257 residues: Imidazole glycerol phosphate synthase subunit HisF (257 aa).

Active-site residues include Asp-11 and Asp-130.

This sequence belongs to the HisA/HisF family. As to quaternary structure, heterodimer of HisH and HisF.

It localises to the cytoplasm. It carries out the reaction 5-[(5-phospho-1-deoxy-D-ribulos-1-ylimino)methylamino]-1-(5-phospho-beta-D-ribosyl)imidazole-4-carboxamide + L-glutamine = D-erythro-1-(imidazol-4-yl)glycerol 3-phosphate + 5-amino-1-(5-phospho-beta-D-ribosyl)imidazole-4-carboxamide + L-glutamate + H(+). It participates in amino-acid biosynthesis; L-histidine biosynthesis; L-histidine from 5-phospho-alpha-D-ribose 1-diphosphate: step 5/9. Its function is as follows. IGPS catalyzes the conversion of PRFAR and glutamine to IGP, AICAR and glutamate. The HisF subunit catalyzes the cyclization activity that produces IGP and AICAR from PRFAR using the ammonia provided by the HisH subunit. The chain is Imidazole glycerol phosphate synthase subunit HisF from Shewanella piezotolerans (strain WP3 / JCM 13877).